A 112-amino-acid chain; its full sequence is UPF0482 protein Ent638_1930 (112 aa).

The N-terminal stretch at 1–27 (MTTLRKRLCLATLLSLTALAFTAPVSA) is a signal peptide.

The protein belongs to the UPF0482 family.

This chain is UPF0482 protein Ent638_1930, found in Enterobacter sp. (strain 638).